The following is a 308-amino-acid chain: Aspartate carbamoyltransferase catalytic subunit (308 aa).

The carbamoyl phosphate site is built by Arg-55 and Thr-56. Lys-83 serves as a coordination point for L-aspartate. Carbamoyl phosphate contacts are provided by Arg-105, His-133, and Gln-136. Arg-166 and Arg-220 together coordinate L-aspartate. Carbamoyl phosphate-binding residues include Gly-261 and Pro-262.

Belongs to the aspartate/ornithine carbamoyltransferase superfamily. ATCase family. In terms of assembly, heterododecamer (2C3:3R2) of six catalytic PyrB chains organized as two trimers (C3), and six regulatory PyrI chains organized as three dimers (R2).

It catalyses the reaction carbamoyl phosphate + L-aspartate = N-carbamoyl-L-aspartate + phosphate + H(+). It participates in pyrimidine metabolism; UMP biosynthesis via de novo pathway; (S)-dihydroorotate from bicarbonate: step 2/3. Its function is as follows. Catalyzes the condensation of carbamoyl phosphate and aspartate to form carbamoyl aspartate and inorganic phosphate, the committed step in the de novo pyrimidine nucleotide biosynthesis pathway. This Chlorobium phaeobacteroides (strain DSM 266 / SMG 266 / 2430) protein is Aspartate carbamoyltransferase catalytic subunit.